The sequence spans 273 residues: Phosphatidylglycerol--prolipoprotein diacylglyceryl transferase (273 aa).

7 consecutive transmembrane segments (helical) span residues 21–41 (ISVR…LWLA), 60–80 (LLFA…VLFY), 95–115 (VWTG…AMLW), 124–144 (FFGV…MGRM), 176–196 (SQLY…NWFI), 203–223 (GSVS…VEYV), and 236–256 (FISM…LMMV). Arg143 lines the a 1,2-diacyl-sn-glycero-3-phospho-(1'-sn-glycerol) pocket.

The protein belongs to the Lgt family.

It is found in the cell inner membrane. The enzyme catalyses L-cysteinyl-[prolipoprotein] + a 1,2-diacyl-sn-glycero-3-phospho-(1'-sn-glycerol) = an S-1,2-diacyl-sn-glyceryl-L-cysteinyl-[prolipoprotein] + sn-glycerol 1-phosphate + H(+). It functions in the pathway protein modification; lipoprotein biosynthesis (diacylglyceryl transfer). Functionally, catalyzes the transfer of the diacylglyceryl group from phosphatidylglycerol to the sulfhydryl group of the N-terminal cysteine of a prolipoprotein, the first step in the formation of mature lipoproteins. This Vibrio atlanticus (strain LGP32) (Vibrio splendidus (strain Mel32)) protein is Phosphatidylglycerol--prolipoprotein diacylglyceryl transferase.